The primary structure comprises 142 residues: Transcriptional regulator MraZ (142 aa).

2 consecutive SpoVT-AbrB domains span residues 5–51 (ASAL…PRPE) and 77–120 (AMDV…DSQT).

It belongs to the MraZ family. Forms oligomers.

The protein localises to the cytoplasm. It localises to the nucleoid. This is Transcriptional regulator MraZ from Burkholderia multivorans (strain ATCC 17616 / 249).